A 106-amino-acid polypeptide reads, in one-letter code: Immunoglobulin lambda constant 7 (106 aa).

An Ig-like domain is found at 7 to 101 (PSVTLFPPSS…EGSTVEKTVA (95 aa)). Cys28 and Cys87 are joined by a disulfide.

As to quaternary structure, immunoglobulins are composed of two identical heavy chains and two identical light chains; disulfide-linked.

The protein localises to the secreted. It localises to the cell membrane. In terms of biological role, constant region of immunoglobulin light chains. Immunoglobulins, also known as antibodies, are membrane-bound or secreted glycoproteins produced by B lymphocytes. In the recognition phase of humoral immunity, the membrane-bound immunoglobulins serve as receptors which, upon binding of a specific antigen, trigger the clonal expansion and differentiation of B lymphocytes into immunoglobulins-secreting plasma cells. Secreted immunoglobulins mediate the effector phase of humoral immunity, which results in the elimination of bound antigens. The antigen binding site is formed by the variable domain of one heavy chain, together with that of its associated light chain. Thus, each immunoglobulin has two antigen binding sites with remarkable affinity for a particular antigen. The variable domains are assembled by a process called V-(D)-J rearrangement and can then be subjected to somatic hypermutations which, after exposure to antigen and selection, allow affinity maturation for a particular antigen. The sequence is that of Immunoglobulin lambda constant 7 from Homo sapiens (Human).